The primary structure comprises 273 residues: Transposable element Tcb2 transposase (273 aa).

This sequence belongs to the transposase 5 family.

It localises to the nucleus. Its function is as follows. Probably essential for transposable element Tcb2 transposition. This is Transposable element Tcb2 transposase from Caenorhabditis briggsae.